Here is a 163-residue protein sequence, read N- to C-terminus: Nucleotide-binding protein CKO_02735 (163 aa).

Belongs to the YajQ family.

In terms of biological role, nucleotide-binding protein. The chain is Nucleotide-binding protein CKO_02735 from Citrobacter koseri (strain ATCC BAA-895 / CDC 4225-83 / SGSC4696).